A 238-amino-acid chain; its full sequence is Large ribosomal subunit protein uL2 (238 aa).

The tract at residues 198-238 (HPHGGGLHQSVSRPSTVSRNAPPGRKVGHIASRRTGRRGGA) is disordered. Over residues 206–216 (QSVSRPSTVSR) the composition is skewed to polar residues. Residues 223 to 238 (KVGHIASRRTGRRGGA) show a composition bias toward basic residues.

The protein belongs to the universal ribosomal protein uL2 family. In terms of assembly, part of the 50S ribosomal subunit. Forms a bridge to the 30S subunit in the 70S ribosome.

Its function is as follows. One of the primary rRNA binding proteins. Required for association of the 30S and 50S subunits to form the 70S ribosome, for tRNA binding and peptide bond formation. It has been suggested to have peptidyltransferase activity; this is somewhat controversial. Makes several contacts with the 16S rRNA in the 70S ribosome. In Sulfolobus acidocaldarius (strain ATCC 33909 / DSM 639 / JCM 8929 / NBRC 15157 / NCIMB 11770), this protein is Large ribosomal subunit protein uL2.